The following is a 432-amino-acid chain: Eukaryotic translation initiation factor 3 subunit E (432 aa).

Residues 221–401 enclose the PCI domain; it reads VYYNYPKGRD…MGVKSVSIHE (181 aa).

Belongs to the eIF-3 subunit E family. As to quaternary structure, component of the eukaryotic translation initiation factor 3 (eIF-3) complex.

It is found in the cytoplasm. Component of the eukaryotic translation initiation factor 3 (eIF-3) complex, which is involved in protein synthesis of a specialized repertoire of mRNAs and, together with other initiation factors, stimulates binding of mRNA and methionyl-tRNAi to the 40S ribosome. The eIF-3 complex specifically targets and initiates translation of a subset of mRNAs involved in cell proliferation. This is Eukaryotic translation initiation factor 3 subunit E from Caenorhabditis elegans.